Consider the following 496-residue polypeptide: Nucleolar and spindle-associated protein 1-B (496 aa).

Disordered stretches follow at residues 44–206 (YPES…HEAH), 250–294 (TPVS…STAN), and 338–496 (KSSS…VPVK). Over residues 56–69 (GCTSLTDTDELNSS) the composition is skewed to polar residues. Residues 121–134 (TQDKDCLESKKKEV) show a composition bias toward basic and acidic residues. The segment covering 150–159 (QDTSKQNNSE) has biased composition (polar residues). The segment covering 261–281 (SRLSLLSPLPRTTGASPSRTP) has biased composition (low complexity). 2 stretches are compositionally biased toward polar residues: residues 376-396 (NTTI…NKAN) and 403-423 (AQNT…QASL). Residues 447–459 (SGSNSNVSVLKNN) are compositionally biased toward low complexity. Residues 467–485 (TREERRKQHELDRKGKRDQ) are compositionally biased toward basic and acidic residues.

It belongs to the NUSAP family. As to quaternary structure, interacts with DNA, microtubules, ipo7, kpna2 and kpnb1. Microtubule stabilization is inhibited by ipo7 and kpna2, while microtubule bundling is inhibited by kpnb1. Active GTP-bound ran causes dissociation of ipo7 and kpnb1.

The protein localises to the cytoplasm. It localises to the nucleus. Its subcellular location is the cytoskeleton. The protein resides in the spindle. Its function is as follows. Microtubule-associated protein with the capacity to bundle and stabilize microtubules. May associate with chromosomes and promote the organization of meiotic or mitotic spindle microtubules around them. The protein is Nucleolar and spindle-associated protein 1-B (nusap1-b) of Xenopus laevis (African clawed frog).